A 294-amino-acid chain; its full sequence is Protein RarD (294 aa).

The Cytoplasmic segment spans residues 1–11; that stretch reads MDAKQTRQGVL. The helical transmembrane segment at 12–34 threads the bilayer; the sequence is LALAAYFIWGIAPAYFKLIYYVP. The 128-residue stretch at 18–145 folds into the EamA domain; that stretch reads FIWGIAPAYF…AVCGVLVQLW (128 aa). At 35–37 the chain is on the periplasmic side; it reads ADE. Residues 38–60 form a helical membrane-spanning segment; it reads ILTHRVIWSFFFMVALLSVSRQW. The Cytoplasmic portion of the chain corresponds to 61 to 72; sequence RQVKRLLKTPKK. The helical transmembrane segment at 73–95 threads the bilayer; sequence IFLLALSAVLVGGNWLLFIWAVN. The Periplasmic portion of the chain corresponds to 96–99; sequence NHHM. A helical membrane pass occupies residues 100 to 122; it reads LEASLGYFINPLVNILLGMIFLG. The Cytoplasmic segment spans residues 123–128; the sequence is ERFRRM. A helical transmembrane segment spans residues 129–146; sequence QWLAVILAVCGVLVQLWT. Topologically, residues 147–149 are periplasmic; that stretch reads FGS. The chain crosses the membrane as a helical span at residues 150 to 167; sequence LPIIALGLAFSFAFYGLV. The Cytoplasmic segment spans residues 168–179; sequence RKKIAVEAQTGM. The helical transmembrane segment at 180–197 threads the bilayer; that stretch reads LVETLWLLPVAAIYLFSI. Residues 198–211 lie on the Periplasmic side of the membrane; it reads ADSATSHMGQNALS. The chain crosses the membrane as a helical span at residues 212-234; the sequence is LNLLLMAAGVVTTIPLLCFTGAA. Over 235 to 238 the chain is Cytoplasmic; it reads TRLR. The chain crosses the membrane as a helical span at residues 239–261; it reads LSTLGFFQYIGPTLMFLLAVTFY. At 262–270 the chain is on the periplasmic side; it reads GEVPGADKM. Residues 271–290 form a helical membrane-spanning segment; it reads VTFAFIWVALAIFVMDAIYT. The Cytoplasmic portion of the chain corresponds to 291–294; it reads QRKK.

The protein belongs to the EamA transporter family.

The protein localises to the cell inner membrane. In Salmonella typhi, this protein is Protein RarD (rarD).